The primary structure comprises 471 residues: Tumor necrosis factor receptor superfamily member 1A (471 aa).

An N-terminal signal peptide occupies residues 1-29 (MGLPTVPGLLLPLVLPALLADVYPAGVQG). The Extracellular segment spans residues 30-210 (LVPHPGDLEK…GKDSQDPGTT (181 aa)). TNFR-Cys repeat units lie at residues 43-82 (PCPQGKYNHPQNSTICCTKCHKGTYLYNDCPGPGRDTDCR), 83-125 (VCAP…DTVC), 126-166 (GCRK…DTIC), and 167-195 (HCHMGFFLKGAKCISCHDCKNKECEKLCP). 7 disulfide bridges follow: Cys-44-Cys-58, Cys-59-Cys-72, Cys-62-Cys-81, Cys-84-Cys-99, Cys-102-Cys-117, Cys-105-Cys-125, and Cys-127-Cys-143. A glycan (N-linked (GlcNAc...) asparagine) is linked at Asn-54. Residues Asn-145 and Asn-151 are each glycosylated (N-linked (GlcNAc...) asparagine). 5 disulfide bridges follow: Cys-146/Cys-158, Cys-149/Cys-166, Cys-168/Cys-179, Cys-182/Cys-194, and Cys-185/Cys-190. The chain crosses the membrane as a helical span at residues 211–233 (VLLPLVIVFGLCLASFASVVLAC). At 234–471 (RYQRWKPKLY…RLASEPRLLW (238 aa)) the chain is on the cytoplasmic side. The segment at 340–360 (TPGPPASTHLCTPVQKWEASA) is N-SMase activation domain (NSD). Residues 372–457 (PATLYAVVDG…GCLENIEEAL (86 aa)) enclose the Death domain.

As to quaternary structure, binding of TNF to the extracellular domain leads to homotrimerization. The aggregated death domains provide a novel molecular interface that interacts specifically with the death domain of TRADD. Various TRADD-interacting proteins such as TRAFS, RIPK1 and possibly FADD, are recruited to the complex by their association with TRADD. This complex activates at least two distinct signaling cascades, apoptosis and NF-kappa-B signaling. Interacts with BAG4, BABAM2, FEM1B, GRB2, SQSTM1 and TRPC4AP. Interacts directly with NOL3 (via CARD domain); inhibits TNF-signaling pathway. Interacts with SH3RF2, TRADD and RIPK1. SH3RF2 facilitates the recruitment of RIPK1 and TRADD to TNFRSF1A in a TNF-alpha-dependent process. Interacts with PGLYRP1; this interaction is important for cell death induction. Interacts (via death domain) with MADD (via death domain).

The protein localises to the cell membrane. It is found in the golgi apparatus membrane. Receptor for TNFSF2/TNF-alpha and homotrimeric TNFSF1/lymphotoxin-alpha. The adapter molecule FADD recruits caspase-8 to the activated receptor. The resulting death-inducing signaling complex (DISC) performs caspase-8 proteolytic activation which initiates the subsequent cascade of caspases (aspartate-specific cysteine proteases) mediating apoptosis. This chain is Tumor necrosis factor receptor superfamily member 1A (TNFRSF1A), found in Bos taurus (Bovine).